Reading from the N-terminus, the 424-residue chain is SWI/SNF and RSC complexes subunit arp42 (424 aa).

Belongs to the actin family. In terms of assembly, component of the RSC complex composed of at least arp9, arp42, rsc1, rsc4, rsc7, rsc9, rsc58, sfh1, snf21, ssr1, ssr2, ssr3 and ssr4. The complex interacts with histone and histone variant components of centromeric chromatin. Component of the SWI/SNF global transcription activator complex composed of at least arp9, arp42, snf5, snf22, snf30, sbf59, sol1, ssr1, ssr2, ssr3, ssr4 and tfg3.

It localises to the cytoplasm. It is found in the nucleus. Functionally, component of the chromatin structure remodeling complex (RSC), which is involved in transcription regulation and nucleosome positioning. Controls particularly membrane and organelle development genes. Part of the SWI/SNF complex, an ATP-dependent chromatin remodeling complex, required for the positive and negative regulation of gene expression of a large number of genes. It changes chromatin structure by altering DNA-histone contacts within a nucleosome, leading eventually to a change in nucleosome position, thus facilitating or repressing binding of gene-specific transcription factors. The chain is SWI/SNF and RSC complexes subunit arp42 (arp42) from Schizosaccharomyces pombe (strain 972 / ATCC 24843) (Fission yeast).